The chain runs to 119 residues: Protein RALF-like 22 (119 aa).

Positions 1-23 are cleaved as a signal peptide; that stretch reads MTNTRAIYAVIAILAIVISAVES. Residues 24-70 constitute a propeptide, removed in mature form; that stretch reads TGDFGDSLDFVRAGSSSLFSGCTGSIAECIAEEEEMEFDSDISRRIL. 2 disulfides stabilise this stretch: C88–C98 and C111–C117.

This sequence belongs to the plant rapid alkalinization factor (RALF) family. Post-translationally, proteolytically cleaved, probably by S1P, a subtilisin-like serine protease (subtilase).

Its subcellular location is the secreted. Cell signaling peptide that may regulate plant stress, growth, and development. Mediates a rapid alkalinization of extracellular space by mediating a transient increase in the cytoplasmic Ca(2+) concentration leading to a calcium-dependent signaling events through a cell surface receptor and a concomitant activation of some intracellular mitogen-activated protein kinases. This is Protein RALF-like 22 (RALFL22) from Arabidopsis thaliana (Mouse-ear cress).